Reading from the N-terminus, the 61-residue chain is Metallothionein-1E (61 aa).

Met1 carries the N-acetylmethionine modification. A beta region spans residues 1-29 (MDPNCSCATGGSCTCAGSCKCKECKCTSC). A divalent metal cation is bound by residues Cys5, Cys7, Cys13, Cys15, Cys19, Cys21, Cys24, Cys26, Cys29, Cys33, Cys34, Cys36, Cys37, Cys41, Cys44, Cys48, Cys50, Cys57, Cys59, and Cys60. The alpha stretch occupies residues 30–61 (KKSCCSCCPVGCAKCAQGCVCKGASEKCSCCA).

This sequence belongs to the metallothionein superfamily. Type 1 family. As to quaternary structure, monomer.

Its function is as follows. Metallothioneins have a high content of cysteine residues that bind various heavy metals; these proteins are transcriptionally regulated by both heavy metals and glucocorticoids. The chain is Metallothionein-1E (MT1E) from Homo sapiens (Human).